We begin with the raw amino-acid sequence, 503 residues long: ATP synthase subunit alpha (503 aa).

An ATP-binding site is contributed by 169–176; it reads GDRGTGKT.

It belongs to the ATPase alpha/beta chains family. In terms of assembly, F-type ATPases have 2 components, CF(1) - the catalytic core - and CF(0) - the membrane proton channel. CF(1) has five subunits: alpha(3), beta(3), gamma(1), delta(1), epsilon(1). CF(0) has three main subunits: a(1), b(2) and c(9-12). The alpha and beta chains form an alternating ring which encloses part of the gamma chain. CF(1) is attached to CF(0) by a central stalk formed by the gamma and epsilon chains, while a peripheral stalk is formed by the delta and b chains.

It localises to the cell inner membrane. It catalyses the reaction ATP + H2O + 4 H(+)(in) = ADP + phosphate + 5 H(+)(out). Its function is as follows. Produces ATP from ADP in the presence of a proton gradient across the membrane. The alpha chain is a regulatory subunit. The sequence is that of ATP synthase subunit alpha from Leptospira borgpetersenii serovar Hardjo-bovis (strain L550).